Here is a 220-residue protein sequence, read N- to C-terminus: Flavin-dependent thymidylate synthase (220 aa).

The 208-residue stretch at 1 to 208 (MKIDILDKGF…PWTFEAFLKY (208 aa)) folds into the ThyX domain. FAD-binding positions include threonine 55, 78-81 (RHRI), and glutamate 86. DUMP contacts are provided by residues 75–78 (QWFR), 86–90 (ELSGR), and arginine 147. The short motif at 78–88 (RHRIASYNELS) is the ThyX motif element. FAD contacts are provided by residues 163 to 165 (NAR) and asparagine 169. Arginine 174 provides a ligand contact to dUMP. The active-site Involved in ionization of N3 of dUMP, leading to its activation is the arginine 174.

This sequence belongs to the thymidylate synthase ThyX family. As to quaternary structure, homotetramer. It depends on FAD as a cofactor.

It carries out the reaction dUMP + (6R)-5,10-methylene-5,6,7,8-tetrahydrofolate + NADPH + H(+) = dTMP + (6S)-5,6,7,8-tetrahydrofolate + NADP(+). The catalysed reaction is dUMP + formaldehyde + NADPH + H(+) = dTMP + NADP(+) + H2O. It functions in the pathway pyrimidine metabolism; dTTP biosynthesis. Functionally, catalyzes the reductive methylation of 2'-deoxyuridine-5'-monophosphate (dUMP or deoxyuridylate) to 2'-deoxythymidine-5'-monophosphate (dTMP or deoxythymidylate) while utilizing 5,10-methylenetetrahydrofolate (mTHF) as the methylene donor, and NAD(P)H and FADH(2) as the reductant. This reaction is a critical step in DNA biosynthesis. Can also use formaldehyde instead of mTHF as a direct methylene donor for dTMP synthesis. However, the tighter binding of ThyX to mTHF (KD of 4 uM) compared to formaldehyde (KD of 20 mM) confirms that methylene tetrahydrofolate acts as the biological carbon donor for ThyX, serving as a formaldehyde carrier/transporter and thus avoiding genotoxic effects. The sequence is that of Flavin-dependent thymidylate synthase from Thermotoga maritima (strain ATCC 43589 / DSM 3109 / JCM 10099 / NBRC 100826 / MSB8).